A 331-amino-acid polypeptide reads, in one-letter code: Isopentenyl-diphosphate delta-isomerase (331 aa).

4–5 (RK) contacts substrate. Residues 59 to 61 (AMT), Ser89, and Asn116 each bind FMN. Residue Gln146 coordinates substrate. Glu147 provides a ligand contact to Mg(2+). FMN is bound by residues Lys178, Ser203, Thr208, 252–254 (GIR), and 273–274 (SR).

This sequence belongs to the IPP isomerase type 2 family. In terms of assembly, homooctamer. Dimer of tetramers. The cofactor is FMN. Requires NADPH as cofactor. Mg(2+) serves as cofactor.

The protein resides in the cytoplasm. It catalyses the reaction isopentenyl diphosphate = dimethylallyl diphosphate. Its function is as follows. Involved in the biosynthesis of isoprenoids. Catalyzes the 1,3-allylic rearrangement of the homoallylic substrate isopentenyl (IPP) to its allylic isomer, dimethylallyl diphosphate (DMAPP). This chain is Isopentenyl-diphosphate delta-isomerase, found in Streptococcus mutans serotype c (strain ATCC 700610 / UA159).